Here is a 159-residue protein sequence, read N- to C-terminus: Neuroglobin (159 aa).

The 149-residue stretch at 3-151 folds into the Globin domain; it reads KLSSKDKELI…VVASMSRGWA (149 aa). Heme b contacts are provided by H66 and H98.

Belongs to the globin family. As to quaternary structure, monomer. Homodimers and homotetramers. Mainly monomeric but also detected as part of homodimers and homotetramers.

It is found in the cytoplasm. It localises to the cytosol. The protein localises to the mitochondrion matrix. The enzyme catalyses Fe(III)-heme b-[protein] + nitric oxide + H2O = Fe(II)-heme b-[protein] + nitrite + 2 H(+). Functionally, monomeric globin with a bis-histidyl six-coordinate heme-iron atom through which it can bind dioxygen, carbon monoxide and nitric oxide. Could help transport oxygen and increase its availability to the metabolically active neuronal tissues, though its low quantity in tissues as well as its high affinity for dioxygen, which may limit its oxygen-releasing ability, argue against it. The ferrous/deoxygenated form exhibits a nitrite reductase activity and it could produce nitric oxide which in turn inhibits cellular respiration in response to hypoxia. In its ferrous/deoxygenated state, it may also exhibit GDI (Guanine nucleotide Dissociation Inhibitor) activity toward heterotrimeric G-alpha proteins, thereby regulating signal transduction to facilitate neuroprotective responses in the wake of hypoxia and associated oxidative stress. This Tetraodon nigroviridis (Spotted green pufferfish) protein is Neuroglobin (ngb).